Reading from the N-terminus, the 299-residue chain is ATP phosphoribosyltransferase (299 aa).

This sequence belongs to the ATP phosphoribosyltransferase family. Long subfamily. As to quaternary structure, equilibrium between an active dimeric form, an inactive hexameric form and higher aggregates. Interconversion between the various forms is largely reversible and is influenced by the natural substrates and inhibitors of the enzyme. Mg(2+) is required as a cofactor.

It localises to the cytoplasm. It catalyses the reaction 1-(5-phospho-beta-D-ribosyl)-ATP + diphosphate = 5-phospho-alpha-D-ribose 1-diphosphate + ATP. It participates in amino-acid biosynthesis; L-histidine biosynthesis; L-histidine from 5-phospho-alpha-D-ribose 1-diphosphate: step 1/9. With respect to regulation, feedback inhibited by histidine. Functionally, catalyzes the condensation of ATP and 5-phosphoribose 1-diphosphate to form N'-(5'-phosphoribosyl)-ATP (PR-ATP). Has a crucial role in the pathway because the rate of histidine biosynthesis seems to be controlled primarily by regulation of HisG enzymatic activity. This Buchnera aphidicola subsp. Acyrthosiphon pisum (strain 5A) protein is ATP phosphoribosyltransferase.